The primary structure comprises 182 residues: ATP synthase subunit b, chloroplastic (182 aa).

The helical transmembrane segment at 33-55 threads the bilayer; the sequence is VLNIMLLLFGLIYVLKQFLGSLL.

It belongs to the ATPase B chain family. In terms of assembly, F-type ATPases have 2 components, F(1) - the catalytic core - and F(0) - the membrane proton channel. F(1) has five subunits: alpha(3), beta(3), gamma(1), delta(1), epsilon(1). F(0) has four main subunits: a(1), b(1), b'(1) and c(10-14). The alpha and beta chains form an alternating ring which encloses part of the gamma chain. F(1) is attached to F(0) by a central stalk formed by the gamma and epsilon chains, while a peripheral stalk is formed by the delta, b and b' chains.

The protein resides in the plastid. It localises to the chloroplast thylakoid membrane. In terms of biological role, f(1)F(0) ATP synthase produces ATP from ADP in the presence of a proton or sodium gradient. F-type ATPases consist of two structural domains, F(1) containing the extramembraneous catalytic core and F(0) containing the membrane proton channel, linked together by a central stalk and a peripheral stalk. During catalysis, ATP synthesis in the catalytic domain of F(1) is coupled via a rotary mechanism of the central stalk subunits to proton translocation. Component of the F(0) channel, it forms part of the peripheral stalk, linking F(1) to F(0). This is ATP synthase subunit b, chloroplastic from Antithamnion sp. (Red alga).